The chain runs to 37 residues: Large ribosomal subunit protein bL36 (37 aa).

The protein belongs to the bacterial ribosomal protein bL36 family.

This chain is Large ribosomal subunit protein bL36, found in Mycoplasma pneumoniae (strain ATCC 29342 / M129 / Subtype 1) (Mycoplasmoides pneumoniae).